Here is a 375-residue protein sequence, read N- to C-terminus: Vasculin (375 aa).

2 disordered regions span residues 49–109 (SSDA…TSEI) and 356–375 (DSVQKEDSETSSSSDTSDDE). Polar residues predominate over residues 96 to 108 (MKSQLHSENNTSE). Low complexity predominate over residues 365 to 375 (TSSSSDTSDDE).

Belongs to the vasculin family.

The protein resides in the nucleus. Functions as a GC-rich promoter-specific transactivating transcription factor. The protein is Vasculin (gpbp1) of Xenopus tropicalis (Western clawed frog).